The chain runs to 436 residues: MDQPFTVNSLKKLAAMPDHTDVSLSPEERVRALSKLGCNITISEDITPRRYFRSGVEMERMASVYLEEGNLENAFVLYNKFITLFVEKLPNHRDYQQCAVPEKQDIMKKLKEIAFPRTDELKNDLLKKYNVEYQEYLQSKNKYKAEILKKLEHQRLIEAERKRIAQMRQQQLESEQFLFFEDQLKKQELARGQMRSQQTSGLSEQIDGSALSCFSTHQNNSLLNVFADQPNKSDATNYASHSPPVNRALTPAATLSAVQNLVVEGLRCVVLPEDLCHKFLQLAESNTVRGIETCGILCGKLTHNEFTITHVIVPKQSAGPDYCDMENVEELFNVQDQHDLLTLGWIHTHPTQTAFLSSVDLHTHCSYQLMLPEAIAIVCSPKHKDTGIFRLTNAGMLEVSACKKKGFHPHTKEPRLFSICKHVLVKDIKIIVLDLR.

Methionine 1 is modified (N-acetylmethionine). Phosphoserine is present on residues serine 25 and serine 242. Residues 269–397 (VVLPEDLCHK…IFRLTNAGML (129 aa)) enclose the MPN domain. Residues histidine 347, histidine 349, aspartate 360, histidine 362, cysteine 402, histidine 408, and histidine 410 each coordinate Zn(2+). Positions 347–360 (HTHPTQTAFLSSVD) match the JAMM motif motif.

Belongs to the peptidase M67C family. The cofactor is Zn(2+). As to expression, ubiquitously expressed.

With respect to regulation, inhibited by UbV(SP.1), an ubiquitin variant that also inhibits STAMBP. Its function is as follows. Zinc metalloprotease that specifically cleaves 'Lys-63'-linked polyubiquitin chains. Acts as a positive regulator of the TORC1 signaling pathway by mediating 'Lys-63'-linked deubiquitination of SESN2, thereby inhibiting SESN2-interaction with the GATOR2 complex. Does not cleave 'Lys-48'-linked polyubiquitin chains. The protein is AMSH-like protease of Homo sapiens (Human).